The sequence spans 433 residues: 23S rRNA (uracil(1939)-C(5))-methyltransferase RlmD (433 aa).

In terms of domain architecture, TRAM spans 10 to 68 (RTTTRQIITVSVNDLDSFGQGVARHNGKTLFIPGLLPQENAEVAVTEDKKQYARAKVVR). Residues C81, C87, C90, and C162 each coordinate [4Fe-4S] cluster. 6 residues coordinate S-adenosyl-L-methionine: Q265, F294, N299, E315, N342, and D363. C389 serves as the catalytic Nucleophile.

This sequence belongs to the class I-like SAM-binding methyltransferase superfamily. RNA M5U methyltransferase family. RlmD subfamily.

It carries out the reaction uridine(1939) in 23S rRNA + S-adenosyl-L-methionine = 5-methyluridine(1939) in 23S rRNA + S-adenosyl-L-homocysteine + H(+). Its function is as follows. Catalyzes the formation of 5-methyl-uridine at position 1939 (m5U1939) in 23S rRNA. The polypeptide is 23S rRNA (uracil(1939)-C(5))-methyltransferase RlmD (Shigella flexneri).